Here is a 457-residue protein sequence, read N- to C-terminus: Methylenetetrahydrofolate--tRNA-(uracil-5-)-methyltransferase TrmFO (457 aa).

12 to 17 (GGGLAG) provides a ligand contact to FAD.

It belongs to the MnmG family. TrmFO subfamily. FAD is required as a cofactor.

It localises to the cytoplasm. The catalysed reaction is uridine(54) in tRNA + (6R)-5,10-methylene-5,6,7,8-tetrahydrofolate + NADH + H(+) = 5-methyluridine(54) in tRNA + (6S)-5,6,7,8-tetrahydrofolate + NAD(+). It carries out the reaction uridine(54) in tRNA + (6R)-5,10-methylene-5,6,7,8-tetrahydrofolate + NADPH + H(+) = 5-methyluridine(54) in tRNA + (6S)-5,6,7,8-tetrahydrofolate + NADP(+). Its function is as follows. Catalyzes the folate-dependent formation of 5-methyl-uridine at position 54 (M-5-U54) in all tRNAs. This Myxococcus xanthus (strain DK1622) protein is Methylenetetrahydrofolate--tRNA-(uracil-5-)-methyltransferase TrmFO.